The following is a 515-amino-acid chain: Cyclic AMP receptor-like protein G (515 aa).

At 1–16 (MSSIIFIPNDADNINS) the chain is on the extracellular side. Residues 17–37 (IMVTISSSLSLVGCLFILSIY) traverse the membrane as a helical segment. The Cytoplasmic segment spans residues 38–50 (IYYKELREFQLKL). The chain crosses the membrane as a helical span at residues 51–71 (IFIMTINDFIISIIFLIATHI). The Extracellular segment spans residues 72–92 (QTKYFDAITNVFPFFCNFPDS). The helical transmembrane segment at 93-113 (LLHYFFLSSFFWEVCIAHTLI) threads the bilayer. At 114 to 129 (QVIKYNNDKVEDNLKK) the chain is on the cytoplasmic side. The helical transmembrane segment at 130 to 150 (YFIFSNGLSALIMVSLFFIRS) threads the bilayer. Over 151–164 (YSKIDCHHDSIFPH) the chain is Extracellular. Residues 165 to 185 (LLFFIPLLLTWIYNIIVCALL) traverse the membrane as a helical segment. Residues 186–276 (TKTFKEQAMN…IRKTPNIIWT (91 aa)) lie on the Cytoplasmic side of the membrane. Residues 277 to 297 (SIFFLFSFGFIWSWSILVIIL) traverse the membrane as a helical segment. At 298–306 (KYLSLDVKY) the chain is on the extracellular side. Residues 307–327 (ILMISYFFIPLHGCMNAVCFG) traverse the membrane as a helical segment. At 328–515 (VNDRLRMNLK…FCTIDEDETK (188 aa)) the chain is on the cytoplasmic side. Over residues 362–375 (NGNNKNNKNNNGAN) the composition is skewed to low complexity. Disordered regions lie at residues 362–409 (NGNN…YYQI) and 469–515 (NNNN…DETK). The span at 385 to 396 (SPDDDDDEDDDN) shows a compositional bias: acidic residues. Composition is skewed to low complexity over residues 397–407 (NNNNYSDGNYY) and 469–504 (NNNNNNNNNNNNNNNNNNNNNNINNNDNNNNNNNNN).

Belongs to the G-protein coupled receptor 5 family.

The protein resides in the membrane. Receptor for cAMP. This chain is Cyclic AMP receptor-like protein G (crlG), found in Dictyostelium discoideum (Social amoeba).